Reading from the N-terminus, the 403-residue chain is Argininosuccinate synthase (403 aa).

ATP contacts are provided by residues 12-20 and alanine 39; that span reads AYSGGLDTS. 2 residues coordinate L-citrulline: tyrosine 90 and serine 95. Glycine 120 serves as a coordination point for ATP. Residues threonine 122, asparagine 126, and aspartate 127 each contribute to the L-aspartate site. Asparagine 126 is an L-citrulline binding site. Residues arginine 130, serine 182, serine 191, glutamate 267, and tyrosine 279 each coordinate L-citrulline.

The protein belongs to the argininosuccinate synthase family. Type 1 subfamily. Homotetramer.

Its subcellular location is the cytoplasm. The enzyme catalyses L-citrulline + L-aspartate + ATP = 2-(N(omega)-L-arginino)succinate + AMP + diphosphate + H(+). It participates in amino-acid biosynthesis; L-arginine biosynthesis; L-arginine from L-ornithine and carbamoyl phosphate: step 2/3. In Vesicomyosocius okutanii subsp. Calyptogena okutanii (strain HA), this protein is Argininosuccinate synthase.